The chain runs to 109 residues: Cysteine-rich venom protein 7 (109 aa).

Residues M1–A21 form the signal peptide. 5 disulfides stabilise this stretch: C30–C47, C37–C52, C46–C58, C70–C90, and C78–C98.

As to expression, expressed by the venom gland.

It is found in the secreted. This chain is Cysteine-rich venom protein 7, found in Pimpla hypochondriaca (Parasitoid wasp).